The following is a 580-amino-acid chain: Tyrosyl-DNA phosphodiesterase 1 (580 aa).

Residues 65–117 form a disordered region; sequence ATNKEQEAHSSSSKPAVTAPVASGSSSSGSLDTNPSGSSASGPAASQDTSNLA. Positions 87–110 are enriched in low complexity; the sequence is SGSSSSGSLDTNPSGSSASGPAAS. Catalysis depends on histidine 248, which acts as the Nucleophile. A substrate-binding site is contributed by lysine 250. Residues 387-390 form an interaction with DNA region; that stretch reads SIGS. Catalysis depends on histidine 479, which acts as the Proton donor/acceptor. Residue lysine 481 participates in substrate binding.

Belongs to the tyrosyl-DNA phosphodiesterase family. Expressed in the body and at higher levels in the head. Expressed in the delaminating neuroblasts and a few ganglion mother cells in stage 11-14 embryonic central nervous system. Weak expression is seen in gonads at stage 16. Expressed in the brain; expression is regulated by DIP2.

The protein localises to the nucleus. It localises to the cytoplasm. In terms of biological role, DNA repair enzyme that can remove a variety of covalent adducts from DNA through hydrolysis of a 3'-phosphodiester bond, giving rise to DNA with a free 3' phosphate. Catalyzes the hydrolysis of dead-end complexes between DNA and the topoisomerase I active site tyrosine residue. Hydrolyzes 3'-phosphoglycolates on protruding 3' ends on DNA double-strand breaks due to DNA damage by radiation and free radicals. Acts on blunt-ended double-strand DNA breaks and on single-stranded DNA. May have low 3'exonuclease activity and may be able to remove a single nucleoside from the 3'end of DNA and RNA molecules with 3'hydroxyl groups. Has no exonuclease activity towards DNA or RNA with a 3'phosphate. Required for normal polarization of epidermal cells, correct subcellular location of the Crb complex to the apical lateral membrane, and for normal neuronal development during embryonic development. Contributes to maintenance of epithelial cells in response to topoisomerase-1-mediated and oxidative DNA damage. Required for precise axonal bifurcation in mushroom body neurons. Required for maintenance of normal neuronal function. In Drosophila melanogaster (Fruit fly), this protein is Tyrosyl-DNA phosphodiesterase 1.